We begin with the raw amino-acid sequence, 810 residues long: DNA ligase (810 aa).

Residues 46-50, 95-96, and Glu129 each bind NAD(+); these read DAEYD and SL. Catalysis depends on Lys131, which acts as the N6-AMP-lysine intermediate. Positions 152, 189, 305, and 329 each coordinate NAD(+). The Zn(2+) site is built by Cys434, Cys437, Cys458, and Cys464. The interval 528 to 548 is disordered; it reads ERRAESGTAEPPKKAAKKKGD. The BRCT domain occupies 731-810; the sequence is AAASTFAGKT…DDWLAMVAQG (80 aa).

It belongs to the NAD-dependent DNA ligase family. LigA subfamily. The cofactor is Mg(2+). Mn(2+) serves as cofactor.

The enzyme catalyses NAD(+) + (deoxyribonucleotide)n-3'-hydroxyl + 5'-phospho-(deoxyribonucleotide)m = (deoxyribonucleotide)n+m + AMP + beta-nicotinamide D-nucleotide.. DNA ligase that catalyzes the formation of phosphodiester linkages between 5'-phosphoryl and 3'-hydroxyl groups in double-stranded DNA using NAD as a coenzyme and as the energy source for the reaction. It is essential for DNA replication and repair of damaged DNA. The sequence is that of DNA ligase from Methylobacterium radiotolerans (strain ATCC 27329 / DSM 1819 / JCM 2831 / NBRC 15690 / NCIMB 10815 / 0-1).